Consider the following 902-residue polypeptide: Tiger protein B1 (902 aa).

Positions 1-24 (MKVIYIYLLLLLVCKFLFVKSSCS) are cleaved as a signal peptide. Residues 25-803 (LKVGKIECTK…IIYSENKSTG (779 aa)) are Extracellular-facing. 19 N-linked (GlcNAc...) asparagine glycosylation sites follow: Asn43, Asn144, Asn184, Asn223, Asn272, Asn279, Asn288, Asn358, Asn389, Asn398, Asn437, Asn559, Asn628, Asn644, Asn706, Asn753, Asn764, Asn771, and Asn799. Residues 249–323 (MEGVLNDNGG…ITIDGEYKSN (75 aa)) enclose the IPT/TIG 1 domain. IPT/TIG domains lie at 603-680 (PIIE…ISSS) and 704-788 (ITNT…IFQF). The chain crosses the membrane as a helical span at residues 804–824 (FPNEMYLGFVVFVIFIALISF). Residues 825–902 (AAKNQIEKYF…IRRCFKEHTD (78 aa)) lie on the Cytoplasmic side of the membrane.

Its subcellular location is the cell membrane. Its function is as follows. tgrB1 and tgrC1 are involved in kin discrimination. They play an essential role in aggregation and subsequent development. This is Tiger protein B1 (tgrB1) from Dictyostelium discoideum (Social amoeba).